The following is a 366-amino-acid chain: Chorismate synthase (366 aa).

Residue R48 coordinates NADP(+). FMN is bound by residues 125-127, 238-239, G278, 293-297, and R319; these read RSS, NA, and KPTSS.

It belongs to the chorismate synthase family. Homotetramer. Requires FMNH2 as cofactor.

The catalysed reaction is 5-O-(1-carboxyvinyl)-3-phosphoshikimate = chorismate + phosphate. The protein operates within metabolic intermediate biosynthesis; chorismate biosynthesis; chorismate from D-erythrose 4-phosphate and phosphoenolpyruvate: step 7/7. Functionally, catalyzes the anti-1,4-elimination of the C-3 phosphate and the C-6 proR hydrogen from 5-enolpyruvylshikimate-3-phosphate (EPSP) to yield chorismate, which is the branch point compound that serves as the starting substrate for the three terminal pathways of aromatic amino acid biosynthesis. This reaction introduces a second double bond into the aromatic ring system. The polypeptide is Chorismate synthase (Hydrogenovibrio crunogenus (strain DSM 25203 / XCL-2) (Thiomicrospira crunogena)).